Here is a 272-residue protein sequence, read N- to C-terminus: Dermonecrotic toxin LvSicTox-alphaIC1bii (272 aa).

The active site involves histidine 5. The Mg(2+) site is built by glutamate 25 and aspartate 27. Histidine 41 acts as the Nucleophile in catalysis. Disulfide bonds link cysteine 45/cysteine 51 and cysteine 47/cysteine 189. Aspartate 84 provides a ligand contact to Mg(2+).

This sequence belongs to the arthropod phospholipase D family. Class II subfamily. It depends on Mg(2+) as a cofactor. In terms of tissue distribution, expressed by the venom gland.

The protein localises to the secreted. It carries out the reaction an N-(acyl)-sphingosylphosphocholine = an N-(acyl)-sphingosyl-1,3-cyclic phosphate + choline. The catalysed reaction is an N-(acyl)-sphingosylphosphoethanolamine = an N-(acyl)-sphingosyl-1,3-cyclic phosphate + ethanolamine. It catalyses the reaction a 1-acyl-sn-glycero-3-phosphocholine = a 1-acyl-sn-glycero-2,3-cyclic phosphate + choline. The enzyme catalyses a 1-acyl-sn-glycero-3-phosphoethanolamine = a 1-acyl-sn-glycero-2,3-cyclic phosphate + ethanolamine. Its function is as follows. Dermonecrotic toxins cleave the phosphodiester linkage between the phosphate and headgroup of certain phospholipids (sphingolipid and lysolipid substrates), forming an alcohol (often choline) and a cyclic phosphate. This toxin acts on sphingomyelin (SM). It may also act on ceramide phosphoethanolamine (CPE), lysophosphatidylcholine (LPC) and lysophosphatidylethanolamine (LPE), but not on lysophosphatidylserine (LPS), and lysophosphatidylglycerol (LPG). It acts by transphosphatidylation, releasing exclusively cyclic phosphate products as second products. Induces dermonecrosis, hemolysis, increased vascular permeability, edema, inflammatory response, and platelet aggregation. This is Dermonecrotic toxin LvSicTox-alphaIC1bii from Loxosceles variegata (Recluse spider).